The primary structure comprises 241 residues: Purine nucleoside phosphorylase DeoD-type 1 (241 aa).

His-5 is an a purine D-ribonucleoside binding site. Residues Gly-21, Arg-25, Arg-44, and 88 to 91 (RVGS) contribute to the phosphate site. A purine D-ribonucleoside is bound by residues 180–182 (EME) and 204–205 (SD). Asp-205 functions as the Proton donor in the catalytic mechanism.

This sequence belongs to the PNP/UDP phosphorylase family. In terms of assembly, homohexamer; trimer of homodimers.

It carries out the reaction a purine D-ribonucleoside + phosphate = a purine nucleobase + alpha-D-ribose 1-phosphate. The catalysed reaction is a purine 2'-deoxy-D-ribonucleoside + phosphate = a purine nucleobase + 2-deoxy-alpha-D-ribose 1-phosphate. Catalyzes the reversible phosphorolytic breakdown of the N-glycosidic bond in the beta-(deoxy)ribonucleoside molecules, with the formation of the corresponding free purine bases and pentose-1-phosphate. The protein is Purine nucleoside phosphorylase DeoD-type 1 of Photobacterium profundum (strain SS9).